Here is a 221-residue protein sequence, read N- to C-terminus: Glycerol metabolism activator (221 aa).

A Response regulatory domain is found at 3–120; it reads KILIADDHPL…QMTDAIEQIL (118 aa). Position 55 is a 4-aspartylphosphate (Asp-55). Residues 149–214 form the HTH luxR-type domain; it reads APELLQALTR…QAILSAGDID (66 aa). Positions 173–192 form a DNA-binding region, H-T-H motif; sequence NKQIAYNLDIAETTVKAHVS.

Its function is as follows. Positive activator for glycerol metabolism. Regulates the expression of qedA in a positive manner and governs the expression of ADH I and ADH IIB. General regulator of quinoprotein ethanol oxidation and affects expression of ADH IIG activity but is not the sole regulator. The protein is Glycerol metabolism activator of Pseudomonas putida (Arthrobacter siderocapsulatus).